Reading from the N-terminus, the 567-residue chain is Multidrug and toxin extrusion protein 1 (567 aa).

Methionine 1 carries the N-acetylmethionine modification. At 1–37 (MERTEESAPGPGGADAASERRGLRCLLLPGFLEELRA) the chain is on the cytoplasmic side. Residue serine 18 is modified to Phosphoserine. Residues 38–58 (LLVLAGPAFLAQLMMFLISFI) form a helical membrane-spanning segment. Topologically, residues 59–72 (SSVFCGHLGKLELD) are extracellular. The chain crosses the membrane as a helical span at residues 73–93 (AVTLAIAVINVTGISVGHGLS). Residues 94–120 (SACDTLISQTYGSQNLKHVGVILQRGT) lie on the Cytoplasmic side of the membrane. Residues 121 to 141 (LILLLCCFPCWALFINTEQIL) form a helical membrane-spanning segment. At 142 to 152 (LLFRQDPDVSR) the chain is on the extracellular side. A helical transmembrane segment spans residues 153-173 (LTQTYVMIFIPALPAAFLYTL). Residues 174-187 (QVKYLLNQGIVLPQ) are Cytoplasmic-facing. Residues 188–208 (IMTGIAANLVNALANYVFLYH) form a helical membrane-spanning segment. Topologically, residues 209 to 216 (LHLGVMGS) are extracellular. Residues 217 to 237 (ALANTISQFALAIFLFLYILW) form a helical membrane-spanning segment. Residues 238 to 257 (RRLHQATWGGWSWECLQDWA) lie on the Cytoplasmic side of the membrane. Residues 258–277 (SFLRLAIPSMLMLCIEWWAY) form a helical membrane-spanning segment. Over 278-295 (EVGSFLSGILGMVELGAQ) the chain is Extracellular. A helical membrane pass occupies residues 296–316 (SITYELAIIVYMIPSGFSVAA). Residues 317-336 (NVRVGNALGAGNIDQAKKSS) are Cytoplasmic-facing. The chain crosses the membrane as a helical span at residues 337 to 357 (AISLIVTELFAVTFCVLLLGC). The Extracellular segment spans residues 358-370 (KDLVGYIFTTDRD). A helical transmembrane segment spans residues 371–391 (IVALVAQVIPIYAVSHLFEGL). At 392–408 (ACTCGGILRGTGNQKVG) the chain is on the cytoplasmic side. A helical membrane pass occupies residues 409 to 429 (AIVNAIGYYVIGLPIGIALMF). At 430 to 437 (AAKLGVIG) the chain is on the extracellular side. A helical transmembrane segment spans residues 438–458 (LWSGIIICTTCQTTCFLAFIA). At 459–543 (RLNWKRACQQ…LSGKQLALRR (85 aa)) the chain is on the cytoplasmic side. The helical transmembrane segment at 544–564 (GLLLLGVVLVLVGGILVRVYI) threads the bilayer. The Extracellular segment spans residues 565–567 (RIE).

It belongs to the multi antimicrobial extrusion (MATE) (TC 2.A.66.1) family. In terms of tissue distribution, predominantly expressed in kidney and liver. Also expressed in various cells, including brain glia-like cells and capillaries, pancreatic duct cells, urinary bladder epithelium, adrenal gland cortex, heart, stomach, small intestine, thyroid gland, testes, alpha cells of the islets of Langerhans, Leydig cells, and vitamin A-storing Ito cells. Expressed in heart, stomach, small intestine, bladder, thyroid gland, adrenal gland and testes (at protein level).

Its subcellular location is the cell membrane. It is found in the apical cell membrane. The catalysed reaction is thiamine(out) + H(+)(in) = thiamine(in) + H(+)(out). It catalyses the reaction estrone 3-sulfate(in) + H(+)(out) = estrone 3-sulfate(out) + H(+)(in). It carries out the reaction creatinine(in) + H(+)(out) = creatinine(out) + H(+)(in). The enzyme catalyses agmatine(in) + H(+)(out) = agmatine(out) + H(+)(in). Multidrug efflux pump that functions as a H(+)/organic cation antiporter. Plays a physiological role in the excretion of cationic compounds including endogenous metabolites, drugs, toxins through the kidney and liver, into urine and bile respectively. Mediates the efflux of endogenous compounds such as creatinine, vitamin B1/thiamine, agmatine and estrone-3-sulfate. May also contribute to regulate the transport of cationic compounds in testis across the blood-testis-barrier. This chain is Multidrug and toxin extrusion protein 1 (Slc47a1), found in Mus musculus (Mouse).